A 273-amino-acid chain; its full sequence is GATA-type zinc finger protein 1 (273 aa).

Disordered stretches follow at residues 99-143 and 172-201; these read RDSK…ERVD and SSRS…AGSE. The GATA-type zinc finger occupies 208 to 232; the sequence is CASCRTQRTPLWRDAEDGTPLCNAC.

It is found in the nucleus. In terms of biological role, transcriptional regulator that plays a key role in germ cell development. Determines the oogenic fate by activating key genes for the oogenic program and meiotic prophase entry. Acts downstream of bone morphogenetic protein (BMP) by regulating expression of genes required for the oogenic programs, which are repressed by Polycomb activities in sexually uncommitted germ cells. Regulates expression of STRA8, a central downstream effector for the meiotic program. Acts independently of retinoic acid (RA). In males, not required for germ-cell sex determination, but required to allow the spermatogonia to efficiently accomplish the meiotic prophase. This Homo sapiens (Human) protein is GATA-type zinc finger protein 1.